A 756-amino-acid chain; its full sequence is 1-phosphatidylinositol 4,5-bisphosphate phosphodiesterase delta-1 (756 aa).

In terms of domain architecture, PH spans 21-130 (ALLKGSQLLK…WVLGLHKIIH (110 aa)). Residues 30–57 (KVKSSSWRRERFYKLQEDCKTIWQESRK) are substrate binding. EF-hand domains follow at residues 140–175 (KLQH…LNIQ) and 176–211 (VDDS…LTQR). Ca(2+) contacts are provided by aspartate 153, asparagine 155, aspartate 157, lysine 159, glutamate 164, aspartate 189, serine 191, threonine 193, serine 195, and glutamate 200. A glycan (O-linked (GlcNAc) serine) is linked at serine 191. A glycan (O-linked (GlcNAc) threonine) is linked at threonine 193. A PI-PLC X-box domain is found at 296–440 (QDMGQPLSHY…LKGKILLKGK (145 aa)). Residue histidine 311 is part of the active site. Asparagine 312, glutamate 341, and aspartate 343 together coordinate Ca(2+). Histidine 356 is a catalytic residue. Residue glutamate 390 coordinates Ca(2+). The substrate site is built by lysine 438 and lysine 440. The residue at position 457 (threonine 457) is a Phosphothreonine. The residue at position 460 (serine 460) is a Phosphoserine. A PI-PLC Y-box domain is found at 492–609 (LSDMVIYCKS…GYVLKPAFLR (118 aa)). Positions 522 and 549 each coordinate substrate. A C2 domain is found at 611 to 737 (PNGTFNPRAL…QGYRHVHLMS (127 aa)). Positions 651, 653, 677, 706, 707, and 708 each coordinate Ca(2+).

Interacts with TGM2. The cofactor is Ca(2+). In terms of tissue distribution, strongly expressed in lung, liver and heart. Also expressed at least in pancreas, kidney, skeletal muscle, placenta and brain.

It catalyses the reaction a 1,2-diacyl-sn-glycero-3-phospho-(1D-myo-inositol-4,5-bisphosphate) + H2O = 1D-myo-inositol 1,4,5-trisphosphate + a 1,2-diacyl-sn-glycerol + H(+). It carries out the reaction a 1,2-diacyl-sn-glycero-3-phospho-(1D-myo-inositol) + H2O = 1D-myo-inositol 1-phosphate + a 1,2-diacyl-sn-glycerol + H(+). The production of the second messenger molecules diacylglycerol (DAG) and inositol 1,4,5-trisphosphate (IP3) is mediated by activated phosphatidylinositol-specific phospholipase C enzymes. Essential for trophoblast and placental development. Binds phosphatidylinositol 4,5-bisphosphate. In Homo sapiens (Human), this protein is 1-phosphatidylinositol 4,5-bisphosphate phosphodiesterase delta-1.